A 360-amino-acid chain; its full sequence is Photosystem II protein D1 (360 aa).

Transmembrane regions (helical) follow at residues 29-46 (YIGWFGVLMIPTLLTATS), 118-133 (HFLTGVACYIGREWEL), and 142-156 (WISVAFTAPVAAAAA). His-118 is a chlorophyll a binding site. Position 126 (Tyr-126) interacts with pheophytin a. Positions 170 and 189 each coordinate [CaMn4O5] cluster. The helical transmembrane segment at 197-218 (FHQLGVAGVFGGSLFSAMHGSL) threads the bilayer. His-198 provides a ligand contact to chlorophyll a. A quinone contacts are provided by residues His-215 and 264-265 (SF). His-215 provides a ligand contact to Fe cation. Residue His-272 participates in Fe cation binding. A helical membrane pass occupies residues 274-288 (FLGLWPVVGIWLTAL). [CaMn4O5] cluster is bound by residues His-332, Glu-333, Asp-342, and Ala-344. Positions 345–360 (SGESLPVALTAPAVNG) are excised as a propeptide.

This sequence belongs to the reaction center PufL/M/PsbA/D family. As to quaternary structure, PSII is composed of 1 copy each of membrane proteins PsbA, PsbB, PsbC, PsbD, PsbE, PsbF, PsbH, PsbI, PsbJ, PsbK, PsbL, PsbM, PsbT, PsbX, PsbY, PsbZ, Psb30/Ycf12, at least 3 peripheral proteins of the oxygen-evolving complex and a large number of cofactors. It forms dimeric complexes. It depends on The D1/D2 heterodimer binds P680, chlorophylls that are the primary electron donor of PSII, and subsequent electron acceptors. It shares a non-heme iron and each subunit binds pheophytin, quinone, additional chlorophylls, carotenoids and lipids. D1 provides most of the ligands for the Mn4-Ca-O5 cluster of the oxygen-evolving complex (OEC). There is also a Cl(-1) ion associated with D1 and D2, which is required for oxygen evolution. The PSII complex binds additional chlorophylls, carotenoids and specific lipids. as a cofactor. In terms of processing, tyr-161 forms a radical intermediate that is referred to as redox-active TyrZ, YZ or Y-Z. Post-translationally, C-terminally processed by CTPA; processing is essential to allow assembly of the oxygen-evolving complex and thus photosynthetic growth.

It localises to the plastid. Its subcellular location is the chloroplast thylakoid membrane. The catalysed reaction is 2 a plastoquinone + 4 hnu + 2 H2O = 2 a plastoquinol + O2. Functionally, photosystem II (PSII) is a light-driven water:plastoquinone oxidoreductase that uses light energy to abstract electrons from H(2)O, generating O(2) and a proton gradient subsequently used for ATP formation. It consists of a core antenna complex that captures photons, and an electron transfer chain that converts photonic excitation into a charge separation. The D1/D2 (PsbA/PsbD) reaction center heterodimer binds P680, the primary electron donor of PSII as well as several subsequent electron acceptors. This Porphyra purpurea (Red seaweed) protein is Photosystem II protein D1.